We begin with the raw amino-acid sequence, 337 residues long: Eukaryotic translation initiation factor 3 subunit I (337 aa).

WD repeat units lie at residues 8-47, 50-91, 147-186, 191-230, and 288-327; these read GHERSLNQIKFNRDGDLIFSVAKDKIVCAWWSANGERLGT, GHQG…KVWD, CTESKATVAGWSYMGKYIIAGHEDGSVSQYDGKTGEQLEN, EFDHQINDIQFSADRTYFITASKDKSAKLMSTRNLAILKT, and GHFGPLNTVHIHPAGTAYASGGEDGYVRVHHFDKPYFDFM.

It belongs to the eIF-3 subunit I family. In terms of assembly, component of the eukaryotic translation initiation factor 3 (eIF-3) complex.

It is found in the cytoplasm. Functionally, component of the eukaryotic translation initiation factor 3 (eIF-3) complex, which is involved in protein synthesis of a specialized repertoire of mRNAs and, together with other initiation factors, stimulates binding of mRNA and methionyl-tRNAi to the 40S ribosome. The eIF-3 complex specifically targets and initiates translation of a subset of mRNAs involved in cell proliferation. This Aspergillus niger (strain ATCC MYA-4892 / CBS 513.88 / FGSC A1513) protein is Eukaryotic translation initiation factor 3 subunit I (tif34).